A 741-amino-acid chain; its full sequence is Melanoma-associated antigen D4 (741 aa).

Over residues 1 to 13 the composition is skewed to polar residues; it reads MAEGSFSVQSESY. 4 disordered regions span residues 1-27, 136-206, 247-296, and 323-379; these read MAEGSFSVQSESYSVEDMDEGSDEVGE, RVAT…EGPS, MAFP…KALA, and PEGA…QPSL. The span at 14–27 shows a compositional bias: acidic residues; it reads SVEDMDEGSDEVGE. Composition is skewed to polar residues over residues 140–151 and 187–196; these read PQVSGEDTQPTT and TSAQSQTGSP. Residues 354–363 show a composition bias toward acidic residues; it reads DEYESSEEER. In terms of domain architecture, MAGE spans 413–611; sequence LQERANKLVK…REWKAHFLEA (199 aa). The tract at residues 700 to 720 is disordered; that stretch reads VSSGTNGGASTSVLDGPSTSS. Positions 701–720 are enriched in polar residues; sequence SSGTNGGASTSVLDGPSTSS.

In terms of assembly, interacts with TRIM27. In terms of tissue distribution, expressed only in brain and ovary among normal tissues. Isoform 1 and isoform 2 are specifically expressed in glioma cells among cancer cells. Detected in some renal cell carcinoma samples.

May enhance ubiquitin ligase activity of RING-type zinc finger-containing E3 ubiquitin-protein ligases. Proposed to act through recruitment and/or stabilization of the Ubl-conjugating enzyme (E2) at the E3:substrate complex. In Homo sapiens (Human), this protein is Melanoma-associated antigen D4 (MAGED4).